Consider the following 151-residue polypeptide: Deoxyuridine 5'-triphosphate nucleotidohydrolase (151 aa).

Substrate-binding positions include R70–G72, N83, L87–D89, and M97.

This sequence belongs to the dUTPase family. Mg(2+) serves as cofactor.

The catalysed reaction is dUTP + H2O = dUMP + diphosphate + H(+). It functions in the pathway pyrimidine metabolism; dUMP biosynthesis; dUMP from dCTP (dUTP route): step 2/2. This enzyme is involved in nucleotide metabolism: it produces dUMP, the immediate precursor of thymidine nucleotides and it decreases the intracellular concentration of dUTP so that uracil cannot be incorporated into DNA. This chain is Deoxyuridine 5'-triphosphate nucleotidohydrolase, found in Histophilus somni (strain 129Pt) (Haemophilus somnus).